The sequence spans 104 residues: Ig lambda-1 chain C region (104 aa).

In terms of domain architecture, Ig-like spans 6-99 (PSVTLFPPSS…EENTVEKSLS (94 aa)). A disulfide bond links Cys-27 and Cys-85.

The protein is Ig lambda-1 chain C region of Rattus norvegicus (Rat).